We begin with the raw amino-acid sequence, 248 residues long: Pyridoxine 5'-phosphate synthase (248 aa).

Asn-10 lines the 3-amino-2-oxopropyl phosphate pocket. 12 to 13 (DH) lines the 1-deoxy-D-xylulose 5-phosphate pocket. Arg-21 lines the 3-amino-2-oxopropyl phosphate pocket. His-46 (proton acceptor) is an active-site residue. 1-deoxy-D-xylulose 5-phosphate is bound by residues Arg-48 and His-53. Glu-73 acts as the Proton acceptor in catalysis. Thr-103 provides a ligand contact to 1-deoxy-D-xylulose 5-phosphate. His-194 acts as the Proton donor in catalysis. 3-amino-2-oxopropyl phosphate contacts are provided by residues Gly-195 and 216–217 (GH).

The protein belongs to the PNP synthase family. Homooctamer; tetramer of dimers.

The protein localises to the cytoplasm. It catalyses the reaction 3-amino-2-oxopropyl phosphate + 1-deoxy-D-xylulose 5-phosphate = pyridoxine 5'-phosphate + phosphate + 2 H2O + H(+). It functions in the pathway cofactor biosynthesis; pyridoxine 5'-phosphate biosynthesis; pyridoxine 5'-phosphate from D-erythrose 4-phosphate: step 5/5. In terms of biological role, catalyzes the complicated ring closure reaction between the two acyclic compounds 1-deoxy-D-xylulose-5-phosphate (DXP) and 3-amino-2-oxopropyl phosphate (1-amino-acetone-3-phosphate or AAP) to form pyridoxine 5'-phosphate (PNP) and inorganic phosphate. This is Pyridoxine 5'-phosphate synthase from Legionella pneumophila (strain Paris).